The primary structure comprises 232 residues: Translation initiation factor IF-3 (232 aa).

Disordered stretches follow at residues 1–21 and 184–232; these read MAIQ…RTNR and LQSQ…AAQR. Residues 193 to 208 are compositionally biased toward low complexity; sequence AAAAAAPAAAPAAGAP. The segment covering 209 to 222 has biased composition (pro residues); the sequence is APTPAPAPAAPAPA. Low complexity predominate over residues 223 to 232; the sequence is PAAADPAAQR.

Belongs to the IF-3 family. Monomer.

It is found in the cytoplasm. In terms of biological role, IF-3 binds to the 30S ribosomal subunit and shifts the equilibrium between 70S ribosomes and their 50S and 30S subunits in favor of the free subunits, thus enhancing the availability of 30S subunits on which protein synthesis initiation begins. In Anaeromyxobacter sp. (strain K), this protein is Translation initiation factor IF-3.